The following is a 405-amino-acid chain: GTPase Obg (405 aa).

One can recognise an Obg domain in the interval 1-159 (MRFIDEAVVT…KVLKFELKVV (159 aa)). The region spanning 160-333 (ADVGLIGLPN…IKYHLMNEIE (174 aa)) is the OBG-type G domain. GTP contacts are provided by residues 166–173 (GLPNAGKS), 191–195 (FTTLV), 213–216 (DIPG), 283–286 (NKID), and 314–316 (ATL). Mg(2+) contacts are provided by S173 and T193. A compositionally biased stretch (basic and acidic residues) spans 371–382 (YRAARKAAREGT). Positions 371 to 405 (YRAARKAAREGTDLSDDDFDGSDDDDDGVEVIYAP) are disordered. The span at 383-399 (DLSDDDFDGSDDDDDGV) shows a compositional bias: acidic residues.

The protein belongs to the TRAFAC class OBG-HflX-like GTPase superfamily. OBG GTPase family. As to quaternary structure, monomer. It depends on Mg(2+) as a cofactor.

Its subcellular location is the cytoplasm. In terms of biological role, an essential GTPase which binds GTP, GDP and possibly (p)ppGpp with moderate affinity, with high nucleotide exchange rates and a fairly low GTP hydrolysis rate. Plays a role in control of the cell cycle, stress response, ribosome biogenesis and in those bacteria that undergo differentiation, in morphogenesis control. The protein is GTPase Obg of Psychrobacter arcticus (strain DSM 17307 / VKM B-2377 / 273-4).